The sequence spans 417 residues: Serine--tRNA ligase (417 aa).

232 to 234 is an L-serine binding site; it reads TAE. 263–265 is an ATP binding site; that stretch reads RKE. Glutamate 286 contacts L-serine. An ATP-binding site is contributed by 350 to 353; that stretch reads EISS. Position 385 (serine 385) interacts with L-serine.

The protein belongs to the class-II aminoacyl-tRNA synthetase family. Type-1 seryl-tRNA synthetase subfamily. As to quaternary structure, homodimer. The tRNA molecule binds across the dimer.

Its subcellular location is the cytoplasm. The catalysed reaction is tRNA(Ser) + L-serine + ATP = L-seryl-tRNA(Ser) + AMP + diphosphate + H(+). The enzyme catalyses tRNA(Sec) + L-serine + ATP = L-seryl-tRNA(Sec) + AMP + diphosphate + H(+). Its pathway is aminoacyl-tRNA biosynthesis; selenocysteinyl-tRNA(Sec) biosynthesis; L-seryl-tRNA(Sec) from L-serine and tRNA(Sec): step 1/1. Its function is as follows. Catalyzes the attachment of serine to tRNA(Ser). Is also able to aminoacylate tRNA(Sec) with serine, to form the misacylated tRNA L-seryl-tRNA(Sec), which will be further converted into selenocysteinyl-tRNA(Sec). In Sulfurihydrogenibium sp. (strain YO3AOP1), this protein is Serine--tRNA ligase.